The primary structure comprises 198 residues: Elongation factor Ts (198 aa).

The involved in Mg(2+) ion dislocation from EF-Tu stretch occupies residues 82–85 (SDFV).

Belongs to the EF-Ts family.

It is found in the cytoplasm. Functionally, associates with the EF-Tu.GDP complex and induces the exchange of GDP to GTP. It remains bound to the aminoacyl-tRNA.EF-Tu.GTP complex up to the GTP hydrolysis stage on the ribosome. This chain is Elongation factor Ts, found in Desulfosudis oleivorans (strain DSM 6200 / JCM 39069 / Hxd3) (Desulfococcus oleovorans).